We begin with the raw amino-acid sequence, 419 residues long: Phosphatidylcholine:ceramide cholinephosphotransferase 1 (419 aa).

Residues 13 to 76 (WSPKKVADWL…LDMIETLKME (64 aa)) enclose the SAM domain. Position 14 is a phosphoserine (serine 14). Helical transmembrane passes span 142–162 (LLAF…ISVV), 190–210 (FSIC…QWLL), 221–241 (FFCI…VTTL), 282–302 (MCGD…YLFI), and 310–330 (LWWY…CILL). The active site involves histidine 291. Residues 331–419 (AHDHYTVDVV…VKYSRLVNDT (89 aa)) lie on the Cytoplasmic side of the membrane. Active-site residues include histidine 334 and aspartate 338.

Belongs to the sphingomyelin synthase family.

It is found in the golgi apparatus membrane. It carries out the reaction an N-acylsphing-4-enine + a 1,2-diacyl-sn-glycero-3-phosphocholine = a sphingomyelin + a 1,2-diacyl-sn-glycerol. It catalyses the reaction 1-(9Z-octadecenoyl)-2-acyl-sn-3-glycerol + a sphingomyelin = a 1-(9Z-octadecenoyl)-2-acyl-sn-glycero-3-phosphocholine + an N-acylsphing-4-enine. The catalysed reaction is N-hexadecanoylsphinganine + a 1,2-diacyl-sn-glycero-3-phosphocholine = N-hexadecanoyl-sphinganine-1-phosphocholine + a 1,2-diacyl-sn-glycerol. The enzyme catalyses N-hexadecanoyl-(4R)-hydroxysphinganine + a 1,2-diacyl-sn-glycero-3-phosphocholine = N-hexadecanoyl-(4R)-hydroxysphinganine-phosphocholine + a 1,2-diacyl-sn-glycerol. It carries out the reaction an N-acylsphing-4-enine + a 1,2-diacyl-sn-glycero-3-phosphoethanolamine = an N-acylsphing-4-enine 1-phosphoethanolamine + a 1,2-diacyl-sn-glycerol. Its pathway is sphingolipid metabolism. In terms of biological role, major sphingomyelin synthase at the Golgi apparatus. Catalyzes the reversible transfer of phosphocholine moiety in sphingomyelin biosynthesis: in the forward reaction transfers phosphocholine head group of phosphatidylcholine (PC) on to ceramide (CER) to form ceramide phosphocholine (sphingomyelin, SM) and diacylglycerol (DAG) as by-product, and in the reverse reaction transfers phosphocholine from SM to DAG to form PC and CER. The direction of the reaction depends on the levels of CER and DAG in Golgi membranes. Converts the newly synthesized CER, that is transported from the endoplasmic reticulum to the trans-Golgi by the Cer transport protein (CERT), to SM. Can form a heteromeric complex with glucosylceramide synthase (GCS) increasing SMS activity and reducing glucosylceramide synthesis, a critical mechanism that controls the metabolic fate of CER in the Golgi. Does not use free phosphorylcholine or CDP-choline as donor. Can also transfer phosphoethanolamine head group of phosphatidylethanolamine (PE) on to CER to form ceramide phosphoethanolamine (CPE). Regulates receptor-mediated signal transduction via mitogenic DAG and proapoptotic CER, as well as via SM, a structural component of membrane rafts that serve as platforms for signal transduction and protein sorting. Plays a role in secretory transport via regulation of DAG pool at the Golgi apparatus and its downstream effects on PRKD1. The sequence is that of Phosphatidylcholine:ceramide cholinephosphotransferase 1 (Sgms1) from Rattus norvegicus (Rat).